The chain runs to 808 residues: uncharacterized protein (808 aa).

35–42 (GPNNVGKT) is an ATP binding site.

This is an uncharacterized protein from Methanocaldococcus jannaschii (strain ATCC 43067 / DSM 2661 / JAL-1 / JCM 10045 / NBRC 100440) (Methanococcus jannaschii).